We begin with the raw amino-acid sequence, 122 residues long: Ribosome-binding factor A (122 aa).

This sequence belongs to the RbfA family. Monomer. Binds 30S ribosomal subunits, but not 50S ribosomal subunits or 70S ribosomes.

Its subcellular location is the cytoplasm. In terms of biological role, one of several proteins that assist in the late maturation steps of the functional core of the 30S ribosomal subunit. Associates with free 30S ribosomal subunits (but not with 30S subunits that are part of 70S ribosomes or polysomes). Required for efficient processing of 16S rRNA. May interact with the 5'-terminal helix region of 16S rRNA. The protein is Ribosome-binding factor A of Opitutus terrae (strain DSM 11246 / JCM 15787 / PB90-1).